Here is a 247-residue protein sequence, read N- to C-terminus: Caffeoyl-CoA O-methyltransferase 2 (247 aa).

K21 contacts substrate. Residues T63, E85, G87 to V88, S93, D111, and A140 contribute to the S-adenosyl-L-methionine site. D163 lines the substrate pocket. D163 is an a divalent metal cation binding site. Position 165 (D165) interacts with S-adenosyl-L-methionine. A divalent metal cation-binding residues include D189 and N190. Residue N194 coordinates substrate.

This sequence belongs to the class I-like SAM-binding methyltransferase superfamily. Cation-dependent O-methyltransferase family. CCoAMT subfamily. It depends on a divalent metal cation as a cofactor.

The enzyme catalyses (E)-caffeoyl-CoA + S-adenosyl-L-methionine = (E)-feruloyl-CoA + S-adenosyl-L-homocysteine + H(+). It functions in the pathway aromatic compound metabolism; phenylpropanoid biosynthesis. Functionally, methylates caffeoyl-CoA to feruloyl-CoA and 5-hydroxyferuloyl-CoA to sinapoyl-CoA. Plays a role in the synthesis of feruloylated polysaccharides. Involved in the reinforcement of the plant cell wall. Also involved in the responding to wounding or pathogen challenge by the increased formation of cell wall-bound ferulic acid polymers. This Eucalyptus globulus (Tasmanian blue gum) protein is Caffeoyl-CoA O-methyltransferase 2 (CCOAOMT2).